The following is a 419-amino-acid chain: [Butirosin acyl-carrier protein]--L-glutamate ligase (419 aa).

An ATP-grasp domain is found at 144 to 345 (RRLMERNGFN…FVESRVLVFN (202 aa)). 174 to 231 (ISAGFSKCVLKVPYGSSGKGLKVIDNERNFRFLLNYIQNRQTNVDLLLEGWHPHRLSL) contributes to the ATP binding site. 3 residues coordinate Mg(2+): D298, E312, and N314. Residues D298, E312, and N314 each contribute to the Mn(2+) site.

In terms of assembly, monomer. Mg(2+) is required as a cofactor. Requires Mn(2+) as cofactor.

It carries out the reaction holo-[BtrI ACP] + L-glutamate + ATP = gamma-L-glutamyl-[BtrI ACP] + ADP + phosphate. The enzyme catalyses 4-aminobutanoyl-[BtrI ACP] + L-glutamate + ATP = 4-(gamma-L-glutamylamino)butanoyl-[BtrI ACP] + ADP + phosphate + H(+). The protein operates within antibiotic biosynthesis; butirosin biosynthesis. In terms of biological role, ATP-dependent ligase that catalyzes 2 steps in the biosynthesis of the side chain of the aminoglycoside antibiotics in the biosynthetic pathway of butirosin. Mediates the addition of one molecule of L-glutamate to a dedicated acyl-carrier protein. Following decarboxylation of the product by BtrK, adds a second L-glutamate molecule. The chain is [Butirosin acyl-carrier protein]--L-glutamate ligase (btrJ) from Niallia circulans (Bacillus circulans).